A 676-amino-acid polypeptide reads, in one-letter code: DNA ligase (676 aa).

Residues 32 to 36 (DAEYD), 81 to 82 (SL), and Glu113 each bind NAD(+). Lys115 serves as the catalytic N6-AMP-lysine intermediate. Arg136, Glu173, Lys291, and Lys315 together coordinate NAD(+). The Zn(2+) site is built by Cys409, Cys412, Cys427, and Cys433. One can recognise a BRCT domain in the interval 595-676 (SEKTYFFNKK…LNSLIRIKEQ (82 aa)).

It belongs to the NAD-dependent DNA ligase family. LigA subfamily. The cofactor is Mg(2+). Mn(2+) is required as a cofactor.

It carries out the reaction NAD(+) + (deoxyribonucleotide)n-3'-hydroxyl + 5'-phospho-(deoxyribonucleotide)m = (deoxyribonucleotide)n+m + AMP + beta-nicotinamide D-nucleotide.. Functionally, DNA ligase that catalyzes the formation of phosphodiester linkages between 5'-phosphoryl and 3'-hydroxyl groups in double-stranded DNA using NAD as a coenzyme and as the energy source for the reaction. It is essential for DNA replication and repair of damaged DNA. The protein is DNA ligase of Buchnera aphidicola subsp. Acyrthosiphon pisum (strain Tuc7).